The primary structure comprises 127 residues: uncharacterized protein (127 aa).

The next 4 helical transmembrane spans lie at 1-21, 32-52, 68-88, and 100-120; these read MYII…YILV, TVAA…LYVF, AFFS…IILV, and ILDN…LVFK.

This sequence belongs to the GtrA family.

The protein resides in the cell membrane. This is an uncharacterized protein from Bacillus subtilis (strain 168).